The primary structure comprises 240 residues: Phosphoribosylaminoimidazole-succinocarboxamide synthase (240 aa).

The protein belongs to the SAICAR synthetase family.

The catalysed reaction is 5-amino-1-(5-phospho-D-ribosyl)imidazole-4-carboxylate + L-aspartate + ATP = (2S)-2-[5-amino-1-(5-phospho-beta-D-ribosyl)imidazole-4-carboxamido]succinate + ADP + phosphate + 2 H(+). It participates in purine metabolism; IMP biosynthesis via de novo pathway; 5-amino-1-(5-phospho-D-ribosyl)imidazole-4-carboxamide from 5-amino-1-(5-phospho-D-ribosyl)imidazole-4-carboxylate: step 1/2. The sequence is that of Phosphoribosylaminoimidazole-succinocarboxamide synthase from Coxiella burnetii (strain RSA 493 / Nine Mile phase I).